We begin with the raw amino-acid sequence, 137 residues long: Small ribosomal subunit protein uS12 (137 aa).

The tract at residues 1–26 is disordered; it reads MPTINQLVRKPRQSKIKKSTSPALNK. A compositionally biased stretch (basic residues) spans 9–18; the sequence is RKPRQSKIKK.

The protein belongs to the universal ribosomal protein uS12 family. Part of the 30S ribosomal subunit. Contacts proteins S8 and S17. May interact with IF1 in the 30S initiation complex.

With S4 and S5 plays an important role in translational accuracy. In terms of biological role, interacts with and stabilizes bases of the 16S rRNA that are involved in tRNA selection in the A site and with the mRNA backbone. Located at the interface of the 30S and 50S subunits, it traverses the body of the 30S subunit contacting proteins on the other side and probably holding the rRNA structure together. The combined cluster of proteins S8, S12 and S17 appears to hold together the shoulder and platform of the 30S subunit. This is Small ribosomal subunit protein uS12 from Listeria innocua serovar 6a (strain ATCC BAA-680 / CLIP 11262).